Consider the following 346-residue polypeptide: Biotin synthase (346 aa).

The 219-residue stretch at 38-256 (QQVQVSTLLS…IAVARIMMPT (219 aa)) folds into the Radical SAM core domain. [4Fe-4S] cluster contacts are provided by Cys-53, Cys-57, and Cys-60. [2Fe-2S] cluster contacts are provided by Cys-97, Cys-128, Cys-188, and Arg-260.

It belongs to the radical SAM superfamily. Biotin synthase family. Homodimer. Requires [4Fe-4S] cluster as cofactor. [2Fe-2S] cluster is required as a cofactor.

It carries out the reaction (4R,5S)-dethiobiotin + (sulfur carrier)-SH + 2 reduced [2Fe-2S]-[ferredoxin] + 2 S-adenosyl-L-methionine = (sulfur carrier)-H + biotin + 2 5'-deoxyadenosine + 2 L-methionine + 2 oxidized [2Fe-2S]-[ferredoxin]. It participates in cofactor biosynthesis; biotin biosynthesis; biotin from 7,8-diaminononanoate: step 2/2. Functionally, catalyzes the conversion of dethiobiotin (DTB) to biotin by the insertion of a sulfur atom into dethiobiotin via a radical-based mechanism. The sequence is that of Biotin synthase from Salmonella newport (strain SL254).